A 470-amino-acid polypeptide reads, in one-letter code: Glutamate--tRNA ligase (470 aa).

The 'HIGH' region signature appears at 15–25; it reads PSPTGFLHIGG. The short motif at 240-244 is the 'KMSKS' region element; it reads KLSKR. Residue Lys243 participates in ATP binding.

This sequence belongs to the class-I aminoacyl-tRNA synthetase family. Glutamate--tRNA ligase type 1 subfamily. Monomer.

The protein localises to the cytoplasm. The catalysed reaction is tRNA(Glu) + L-glutamate + ATP = L-glutamyl-tRNA(Glu) + AMP + diphosphate. In terms of biological role, catalyzes the attachment of glutamate to tRNA(Glu) in a two-step reaction: glutamate is first activated by ATP to form Glu-AMP and then transferred to the acceptor end of tRNA(Glu). This is Glutamate--tRNA ligase from Caulobacter vibrioides (strain ATCC 19089 / CIP 103742 / CB 15) (Caulobacter crescentus).